A 504-amino-acid chain; its full sequence is Dihydrolipoamide dehydrogenase (504 aa).

A mitochondrion-targeting transit peptide spans 1–34 (MLSQRLIGRTAVKSAFRPSGLPTVVNASRWRRGY). FAD is bound by residues 69–78 (EKRGTLGGTC), K87, G151, and 180–182 (TGS). Residues C78 and C83 are joined by a disulfide bond. Residues 217 to 224 (GGGIIGLE), E240, V275, and G310 contribute to the NAD(+) site. FAD is bound by residues D351 and 357–360 (MLAH). H483 acts as the Proton acceptor in catalysis.

Belongs to the class-I pyridine nucleotide-disulfide oxidoreductase family. In terms of assembly, eukaryotic pyruvate dehydrogenase (PDH) complexes are organized as a core consisting of the oligomeric dihydrolipoamide acetyl-transferase (E2), around which are arranged multiple copies of pyruvate dehydrogenase (E1), dihydrolipoamide dehydrogenase (E3) and protein X (E3BP) bound by non-covalent bonds. The Chaetomium thermophilum PDH complex contains 60 E2 units, 12 E3BP units, about 20 E1 units, and 12 or more E3 units. The units are organized in 1 E2 60-mer, 4 E3BP trimers, about 20 E1 tetramers, and a maximum of 12 E3 dimers. The E3BP trimers are bound inside the icosahedral core with tetrahedral symmetry. FAD is required as a cofactor.

Its subcellular location is the mitochondrion. The enzyme catalyses N(6)-[(R)-dihydrolipoyl]-L-lysyl-[protein] + NAD(+) = N(6)-[(R)-lipoyl]-L-lysyl-[protein] + NADH + H(+). Its function is as follows. Lipoamide dehydrogenase is a component of the alpha-ketoacid dehydrogenase complexes. This includes the pyruvate dehydrogenase complex, which catalyzes the overall conversion of pyruvate to acetyl-CoA and CO(2). Also acts as a component of the glycine cleavage system (glycine decarboxylase complex), which catalyzes the degradation of glycine. The 10-megadalton pyruvate dehydrogenase complex contains multiple copies of three enzymatic components: pyruvate dehydrogenase (E1), dihydrolipoamide acetyltransferase (E2) and lipoamide dehydrogenase (E3) and catalyzes the overall oxidative decarboxylation of pyruvate to form acetyl-CoA and CO(2). Within the complex, pyruvate and thiamine pyrophosphate (TPP or vitamin B1) are bound by pyruvate dehydrogenase E1 subunits alpha and beta and pyruvate is decarboxylated leading to the 2-carbon hydrohyethyl bound to TPP. The E2 component contains covalently-bound lipoyl cofactors and transfers the hydroxyethyl group from TPP to an oxidized form of covalently bound lipoamide, and the resulting acetyl group is then transferred to free coenzyme A to form acetyl-CoA and reduced dihydrolipoamide-E2. Finally, the flavoprotein dihydrolipoamide dehydrogenase (E3) re-oxidizes the lipoyl group of dihydrolipoamide-E2 to form lipoamide-E2 and NADH. A fourth subunit, E3BP, is responsible for tethering E3 in proximity to the core, forming the entire metabolon. In Chaetomium thermophilum (strain DSM 1495 / CBS 144.50 / IMI 039719) (Thermochaetoides thermophila), this protein is Dihydrolipoamide dehydrogenase.